Here is a 458-residue protein sequence, read N- to C-terminus: Forkhead box protein J1-A (458 aa).

Over residues threonine 68–serine 78 the composition is skewed to polar residues. A disordered region spans residues threonine 68–methionine 99. The segment at residues lysine 142–leucine 236 is a DNA-binding region (fork-head). Residues threonine 305 to arginine 321 show a composition bias toward basic residues. The tract at residues threonine 305–serine 324 is disordered.

Belongs to the FOXJ1 family. As to expression, expressed in floor plate, dorsal forerunner cells, Kupffers vesicle, the floor plate, pronephric ducts and kidney.

It is found in the nucleus. Key transcription factor required for motile ciliogenesis. Activates genes essential for motile cilia formation and function. Its activity is sufficient for ectopic development of cilia that resemble motile cilia. In Danio rerio (Zebrafish), this protein is Forkhead box protein J1-A.